Here is a 318-residue protein sequence, read N- to C-terminus: UAP56-interacting factor (318 aa).

Methionine 1 is subject to N-acetylmethionine. The disordered stretch occupies residues 1–25 (MNRFGTRLVGATATSSPPPKARSNE). Position 14 is a phosphothreonine (threonine 14). Residues serine 16 and serine 23 each carry the phosphoserine modification. The UAP56-binding motif motif lies at 26 to 44 (NLDKIDMSLDDIIKLNRKE). Position 61 is a phosphoserine (serine 61). The tract at residues 79–100 (GFGKTSLNRRGRVMPGKRRPNG) is disordered. Over residues 85–98 (LNRRGRVMPGKRRP) the composition is skewed to basic residues. Phosphoserine is present on serine 118. Lysine 140 is covalently cross-linked (Glycyl lysine isopeptide (Lys-Gly) (interchain with G-Cter in SUMO1)). Residue lysine 261 forms a Glycyl lysine isopeptide (Lys-Gly) (interchain with G-Cter in SUMO2) linkage.

It belongs to the UIF family. In terms of assembly, interacts with CHTOP. Interacts with DDX39B/UAP56 and NXF1; interaction with DDX39B/UAP56 and NXF1 are mutually exclusive. Interacts with SSRP1; required for its recruitment to mRNAs. Expressed in a wide variety of cancer types.

The protein localises to the nucleus. It is found in the nucleoplasm. Its subcellular location is the nucleus speckle. In terms of biological role, required for mRNA export from the nucleus to the cytoplasm. Acts as an adapter that uses the DDX39B/UAP56-NFX1 pathway to ensure efficient mRNA export and delivering to the nuclear pore. Associates with spliced and unspliced mRNAs simultaneously with ALYREF/THOC4. In Homo sapiens (Human), this protein is UAP56-interacting factor (FYTTD1).